The following is a 339-amino-acid chain: Putative methylthioribose-1-phosphate isomerase (339 aa).

Substrate contacts are provided by residues 43-45, R86, and Q191; that span reads RGA. The active-site Proton donor is the D232. 241-242 provides a ligand contact to substrate; it reads NK.

The protein belongs to the eIF-2B alpha/beta/delta subunits family. MtnA subfamily.

It carries out the reaction 5-(methylsulfanyl)-alpha-D-ribose 1-phosphate = 5-(methylsulfanyl)-D-ribulose 1-phosphate. Catalyzes the interconversion of methylthioribose-1-phosphate (MTR-1-P) into methylthioribulose-1-phosphate (MTRu-1-P). This is Putative methylthioribose-1-phosphate isomerase from Archaeoglobus fulgidus (strain ATCC 49558 / DSM 4304 / JCM 9628 / NBRC 100126 / VC-16).